We begin with the raw amino-acid sequence, 363 residues long: 3-dehydroquinate synthase (363 aa).

NAD(+) contacts are provided by residues 134 to 135 (TT), lysine 147, lysine 156, and 174 to 177 (TLIT). Zn(2+)-binding residues include glutamate 189, histidine 254, and histidine 271.

Belongs to the sugar phosphate cyclases superfamily. Dehydroquinate synthase family. NAD(+) serves as cofactor. It depends on Co(2+) as a cofactor. The cofactor is Zn(2+).

Its subcellular location is the cytoplasm. The catalysed reaction is 7-phospho-2-dehydro-3-deoxy-D-arabino-heptonate = 3-dehydroquinate + phosphate. It functions in the pathway metabolic intermediate biosynthesis; chorismate biosynthesis; chorismate from D-erythrose 4-phosphate and phosphoenolpyruvate: step 2/7. In terms of biological role, catalyzes the conversion of 3-deoxy-D-arabino-heptulosonate 7-phosphate (DAHP) to dehydroquinate (DHQ). This Prochlorococcus marinus subsp. pastoris (strain CCMP1986 / NIES-2087 / MED4) protein is 3-dehydroquinate synthase.